A 163-amino-acid polypeptide reads, in one-letter code: Nucleotide-binding protein AM1_1863 (163 aa).

Belongs to the YajQ family.

Nucleotide-binding protein. The protein is Nucleotide-binding protein AM1_1863 of Acaryochloris marina (strain MBIC 11017).